An 806-amino-acid polypeptide reads, in one-letter code: Glycerol-3-phosphate acyltransferase (806 aa).

The HXXXXD motif signature appears at 305-310 (CHRSHM).

Belongs to the GPAT/DAPAT family.

The protein resides in the cell inner membrane. It carries out the reaction sn-glycerol 3-phosphate + an acyl-CoA = a 1-acyl-sn-glycero-3-phosphate + CoA. It participates in phospholipid metabolism; CDP-diacylglycerol biosynthesis; CDP-diacylglycerol from sn-glycerol 3-phosphate: step 1/3. This chain is Glycerol-3-phosphate acyltransferase, found in Salmonella agona (strain SL483).